The primary structure comprises 464 residues: UDP-N-acetylmuramoyl-tripeptide--D-alanyl-D-alanine ligase (464 aa).

125–131 (GSNGKTT) is an ATP binding site.

The protein belongs to the MurCDEF family. MurF subfamily.

The protein localises to the cytoplasm. The catalysed reaction is D-alanyl-D-alanine + UDP-N-acetyl-alpha-D-muramoyl-L-alanyl-gamma-D-glutamyl-meso-2,6-diaminopimelate + ATP = UDP-N-acetyl-alpha-D-muramoyl-L-alanyl-gamma-D-glutamyl-meso-2,6-diaminopimeloyl-D-alanyl-D-alanine + ADP + phosphate + H(+). Its pathway is cell wall biogenesis; peptidoglycan biosynthesis. Functionally, involved in cell wall formation. Catalyzes the final step in the synthesis of UDP-N-acetylmuramoyl-pentapeptide, the precursor of murein. In Borreliella burgdorferi (strain ATCC 35210 / DSM 4680 / CIP 102532 / B31) (Borrelia burgdorferi), this protein is UDP-N-acetylmuramoyl-tripeptide--D-alanyl-D-alanine ligase.